Reading from the N-terminus, the 29-residue chain is U20-ctenitoxin-Co1a (29 aa).

2 cysteine pairs are disulfide-bonded: Cys3–Cys16 and Cys10–Cys21.

In terms of tissue distribution, expressed by the venom gland.

The protein resides in the secreted. This is U20-ctenitoxin-Co1a from Ctenus ornatus (Brazilian spider).